The chain runs to 475 residues: Ribulose bisphosphate carboxylase large chain (475 aa).

Residues 1 to 2 (MS) constitute a propeptide that is removed on maturation. The residue at position 3 (proline 3) is an N-acetylproline. Lysine 14 is subject to N6,N6,N6-trimethyllysine. Asparagine 123 and threonine 173 together coordinate substrate. The Proton acceptor role is filled by lysine 175. Substrate is bound at residue lysine 177. Mg(2+) contacts are provided by lysine 201, aspartate 203, and glutamate 204. Residue lysine 201 is modified to N6-carboxylysine. The Proton acceptor role is filled by histidine 294. Substrate-binding residues include arginine 295, histidine 327, and serine 379.

It belongs to the RuBisCO large chain family. Type I subfamily. In terms of assembly, heterohexadecamer of 8 large chains and 8 small chains; disulfide-linked. The disulfide link is formed within the large subunit homodimers. It depends on Mg(2+) as a cofactor. The disulfide bond which can form in the large chain dimeric partners within the hexadecamer appears to be associated with oxidative stress and protein turnover.

The protein localises to the plastid. Its subcellular location is the chloroplast. The enzyme catalyses 2 (2R)-3-phosphoglycerate + 2 H(+) = D-ribulose 1,5-bisphosphate + CO2 + H2O. The catalysed reaction is D-ribulose 1,5-bisphosphate + O2 = 2-phosphoglycolate + (2R)-3-phosphoglycerate + 2 H(+). Its function is as follows. RuBisCO catalyzes two reactions: the carboxylation of D-ribulose 1,5-bisphosphate, the primary event in carbon dioxide fixation, as well as the oxidative fragmentation of the pentose substrate in the photorespiration process. Both reactions occur simultaneously and in competition at the same active site. The protein is Ribulose bisphosphate carboxylase large chain of Amborella trichopoda.